The primary structure comprises 133 residues: Large ribosomal subunit protein bL20 (133 aa).

Belongs to the bacterial ribosomal protein bL20 family.

Functionally, binds directly to 23S ribosomal RNA and is necessary for the in vitro assembly process of the 50S ribosomal subunit. It is not involved in the protein synthesizing functions of that subunit. The protein is Large ribosomal subunit protein bL20 of Bartonella quintana (strain Toulouse) (Rochalimaea quintana).